The following is a 330-amino-acid chain: Beta-1,6-galactofuranosyltransferase WbbI (330 aa).

It localises to the cytoplasm. The protein operates within bacterial outer membrane biogenesis; lipopolysaccharide biosynthesis. Functionally, involved in the transfer of galactofuranose (Galf) onto an alpha-D-gluco-configured acceptor substrate to form a beta-1,6-linkage. It uses n-octyl alpha-D-glucopyranoside as an acceptor substrate for the addition of galactofuranose from the donor substrate UDP-galactofuranose. It is not able to use beta-D-glucopyranoside isomers. This is Beta-1,6-galactofuranosyltransferase WbbI (wbbI) from Escherichia coli (strain K12).